The chain runs to 195 residues: PE-PGRS family protein PE_PGRS61 (195 aa).

It belongs to the mycobacterial PE family. PGRS subfamily. As to quaternary structure, interacts with human TLR2.

It is found in the secreted. Its subcellular location is the cell wall. The protein resides in the cell surface. With respect to regulation, binding of Ca(2+) to PE_PGRS61 induces conformational changes and increases affinity for TLR2. In terms of biological role, mediates Ca(2+)-dependent up-regulation of the anti-inflammatory cytokine IL-10. The protein is PE-PGRS family protein PE_PGRS61 of Mycobacterium tuberculosis (strain ATCC 25618 / H37Rv).